A 174-amino-acid chain; its full sequence is Co-chaperone protein HscB homolog (174 aa).

The 73-residue stretch at 2–74 (NYFELFKFPP…IRRAEHMLSL (73 aa)) folds into the J domain.

The protein belongs to the HscB family. In terms of assembly, interacts with HscA and stimulates its ATPase activity.

Co-chaperone involved in the maturation of iron-sulfur cluster-containing proteins. Seems to help targeting proteins to be folded toward HscA. The polypeptide is Co-chaperone protein HscB homolog (Shewanella baltica (strain OS195)).